Reading from the N-terminus, the 35-residue chain is MSDINATRLPFVFVASPPCVGDDIAMVLTRGENLC.

Positions 1-10 (MSDINATRLP) are excised as a propeptide. The cyclopeptide (Phe-Pro) cross-link spans 11 to 18 (FVFVASPP). Positions 19–35 (CVGDDIAMVLTRGENLC) are excised as a propeptide.

The protein belongs to the MSDIN fungal toxin family. Post-translationally, processed by the macrocyclase-peptidase enzyme POPB to yield a toxic cyclic octapeptide. POPB first removes 10 residues from the N-terminus. Conformational trapping of the remaining peptide forces the enzyme to release this intermediate rather than proceed to macrocyclization. The enzyme rebinds the remaining peptide in a different conformation and catalyzes macrocyclization of the N-terminal 8 residues. In terms of tissue distribution, expressed in basidiocarps.

In terms of biological role, probable toxin that belongs to the MSDIN-like toxin family responsible for a large number of food poisoning cases and deaths. The protein is MSDIN-like toxin proprotein 8 of Amanita exitialis (Guangzhou destroying angel).